The chain runs to 277 residues: Large ribosomal subunit protein uL2 (277 aa).

Residues 219 to 277 (TVRGSVMNPNDHPHGGGEGRSPIGHPSPRTPWGKPALGYKTRKNKKYSDRFIVKRRHDK) are disordered.

Belongs to the universal ribosomal protein uL2 family. As to quaternary structure, part of the 50S ribosomal subunit. Forms a bridge to the 30S subunit in the 70S ribosome.

One of the primary rRNA binding proteins. Required for association of the 30S and 50S subunits to form the 70S ribosome, for tRNA binding and peptide bond formation. It has been suggested to have peptidyltransferase activity; this is somewhat controversial. Makes several contacts with the 16S rRNA in the 70S ribosome. The polypeptide is Large ribosomal subunit protein uL2 (Clostridium botulinum (strain ATCC 19397 / Type A)).